The primary structure comprises 453 residues: Methylenetetrahydrofolate--tRNA-(uracil-5-)-methyltransferase TrmFO (453 aa).

10–15 is an FAD binding site; the sequence is GGGLAG. Residues 433–453 form a disordered region; the sequence is ELAPWIDSAPPTAVPAAPAAG. Residues 441–453 show a composition bias toward low complexity; sequence APPTAVPAAPAAG.

The protein belongs to the MnmG family. TrmFO subfamily. FAD serves as cofactor.

It localises to the cytoplasm. It catalyses the reaction uridine(54) in tRNA + (6R)-5,10-methylene-5,6,7,8-tetrahydrofolate + NADH + H(+) = 5-methyluridine(54) in tRNA + (6S)-5,6,7,8-tetrahydrofolate + NAD(+). The catalysed reaction is uridine(54) in tRNA + (6R)-5,10-methylene-5,6,7,8-tetrahydrofolate + NADPH + H(+) = 5-methyluridine(54) in tRNA + (6S)-5,6,7,8-tetrahydrofolate + NADP(+). Catalyzes the folate-dependent formation of 5-methyl-uridine at position 54 (M-5-U54) in all tRNAs. This Anaeromyxobacter dehalogenans (strain 2CP-1 / ATCC BAA-258) protein is Methylenetetrahydrofolate--tRNA-(uracil-5-)-methyltransferase TrmFO.